A 126-amino-acid chain; its full sequence is Nascent polypeptide-associated complex protein (126 aa).

Residues 10-77 (PRMMKQMQKM…AKKVAKAEEK (68 aa)) form the NAC-A/B domain.

Belongs to the NAC-alpha family. In terms of assembly, homodimer. Interacts with the ribosome. Binds ribosomal RNA.

Contacts the emerging nascent chain on the ribosome. The protein is Nascent polypeptide-associated complex protein of Methanococcus maripaludis (strain C5 / ATCC BAA-1333).